Reading from the N-terminus, the 218-residue chain is Translation initiation factor 6 (218 aa).

This sequence belongs to the eIF-6 family.

Functionally, binds to the 50S ribosomal subunit and prevents its association with the 30S ribosomal subunit to form the 70S initiation complex. The polypeptide is Translation initiation factor 6 (Methanosarcina acetivorans (strain ATCC 35395 / DSM 2834 / JCM 12185 / C2A)).